We begin with the raw amino-acid sequence, 511 residues long: Sorting nexin MVP1 (511 aa).

The interval 1-36 is disordered; the sequence is MDNYEGSDPWNTSSNAWTKDDDHVVSTTNSEPSLNG. Residues 25 to 36 are compositionally biased toward polar residues; that stretch reads VSTTNSEPSLNG. The 120-residue stretch at 128–247 folds into the PX domain; sequence DADIIIIEEI…TFLTVRTDLT (120 aa). A 1,2-diacyl-sn-glycero-3-phospho-(1D-myo-inositol-3-phosphate)-binding residues include arginine 172, serine 174, lysine 198, and arginine 213.

The protein belongs to the sorting nexin family. Homodimer. Forms an autoinhibited tetramer consisting of 2 homodimers that self-interact, wherein the membrane-interacting BAR surfaces are sequestered and the PX lipid-binding sites are occluded. Interacts with VPS1.

It localises to the cytoplasm. The protein resides in the endosome membrane. In terms of biological role, required for vacuolar protein sorting. Component of the retromer-mediated endosome-to-Golgi retrograde pathway. Required for efficient cargo export from the endosome, promoting VPS1-mediated fission of retromer-coated tubules that bud from the endosome. This chain is Sorting nexin MVP1 (MVP1), found in Saccharomyces cerevisiae (strain ATCC 204508 / S288c) (Baker's yeast).